Reading from the N-terminus, the 456-residue chain is FAD-dependent monooxygenase sor5 (456 aa).

A helical transmembrane segment spans residues 18–38 (PLEVAIVGGGLTGLALALGLL). A glycan (N-linked (GlcNAc...) asparagine) is linked at N43. FAD is bound by residues E48 and R119. R200 is an active-site residue. FAD is bound by residues D331 and A344.

This sequence belongs to the paxM FAD-dependent monooxygenase family. Requires FAD as cofactor.

Its subcellular location is the membrane. Its pathway is secondary metabolite biosynthesis. Its function is as follows. FAD-dependent monooxygenase; part of the SOR gene cluster that mediates the biosynthesis of sorbicillinoids, a diverse group of yellow secondary metabolites that restrict growth of competing pathogenic fungi but not of bacteria. Sorbicillinoids biosynthesis requires the action of two PKSs. The SOR cluster is required for the production of trichodimerol and dihydrotrichotetronin, with sor2 being sufficient for production of trichodimerol, but not dihydrotrichotetronin in the light. Sor1 iteratively combines three acetyl units and the growing chain is modified by the ketoacyl reductase subunit, and optional by the enoyl reductase subunit in the second cycle. The polyketide is then handed over to the PKS sor2, which adds three more acetyl units, and two methyl groups. Sor2 releases an aldehyde, which undergoes spontaneous cyclization resulting in the formation of sorbicillin or 2',3'-dihydrosorbicillin. The monooxygenase sor5 oxidizes sorbicillin and 2',3'-dihydrosorbicillin to 2',3'-dihydrosorbicillinol and sorbicillinol, respectively. The oxidoreductase sor8 further converts sorbicillinol into oxosorbicillinol. Sorbicillinol is the building block for the other sorbicillinoids such as disorbicillinol, bisvertinolon, dihydrobisvertinolone, and dihydrotrichotetronine. The protein is FAD-dependent monooxygenase sor5 of Hypocrea jecorina (strain QM6a) (Trichoderma reesei).